A 515-amino-acid polypeptide reads, in one-letter code: 2,3-bisphosphoglycerate-independent phosphoglycerate mutase (515 aa).

Mn(2+) is bound by residues Asp-14 and Ser-63. Ser-63 is an active-site residue. Residues His-124, 154-155 (RD), Arg-186, Arg-192, 259-262 (RADR), and Lys-334 each bind substrate. Asp-401, His-405, Asp-442, His-443, and His-460 together coordinate Mn(2+).

The protein belongs to the BPG-independent phosphoglycerate mutase family. It depends on Mg(2+) as a cofactor. The cofactor is Mn(2+).

The enzyme catalyses (2R)-2-phosphoglycerate = (2R)-3-phosphoglycerate. It participates in carbohydrate degradation; glycolysis; pyruvate from D-glyceraldehyde 3-phosphate: step 3/5. Its activity is regulated as follows. Activity is not affected by 2,3-bisphosphoglycerate. Its function is as follows. Catalyzes the interconversion of 2-phosphoglycerate and 3-phosphoglycerate. This is 2,3-bisphosphoglycerate-independent phosphoglycerate mutase from Brugia malayi (Filarial nematode worm).